Here is a 393-residue protein sequence, read N- to C-terminus: Probable chromate transport protein (393 aa).

The next 10 helical transmembrane spans lie at 22 to 42, 90 to 110, 119 to 139, 146 to 166, 201 to 221, 231 to 251, 261 to 281, 282 to 302, 327 to 347, and 370 to 390; these read YFLK…GYMH, ALVG…LGWA, WMQA…AISA, TVGT…TTIV, FIGL…TSLL, AGAF…GGVV, QFLD…ITTG, FIGF…AMFI, FVNG…VVLG, and LGKK…GVIF.

The protein belongs to the chromate ion transporter (CHR) (TC 2.A.51) family.

It is found in the cell membrane. Its function is as follows. May function in the active transport of chromate into the cell under sulfur-deficient conditions. The polypeptide is Probable chromate transport protein (srpC) (Synechococcus elongatus (strain ATCC 33912 / PCC 7942 / FACHB-805) (Anacystis nidulans R2)).